Reading from the N-terminus, the 506-residue chain is DEAD-box ATP-dependent RNA helicase CshA (506 aa).

Positions 2 to 30 (QNFKELGISDNTVQSLESMGFKEPTPIQK) match the Q motif motif. The Helicase ATP-binding domain maps to 33 to 203 (IPYALQGIDI…QQFMKSPKII (171 aa)). 46–53 (AQTGTGKT) lines the ATP pocket. The short motif at 150 to 153 (DEAD) is the DEAD box element. The 162-residue stretch at 214–375 (QIEEFYTIVK…LRPPHRKEVL (162 aa)) folds into the Helicase C-terminal domain. The interval 436–506 (EKPLSRKGRN…KGRTFADHQK (71 aa)) is disordered. Residues 468 to 480 (KRSKGYSSKKKST) show a composition bias toward basic residues.

The protein belongs to the DEAD box helicase family. CshA subfamily. In terms of assembly, oligomerizes, may be a member of the RNA degradosome.

Its subcellular location is the cytoplasm. It catalyses the reaction ATP + H2O = ADP + phosphate + H(+). DEAD-box RNA helicase possibly involved in RNA degradation. Unwinds dsRNA in both 5'- and 3'-directions, has RNA-dependent ATPase activity. This Staphylococcus aureus (strain MRSA252) protein is DEAD-box ATP-dependent RNA helicase CshA.